Here is a 256-residue protein sequence, read N- to C-terminus: 5-oxoprolinase subunit A (256 aa).

This sequence belongs to the LamB/PxpA family. In terms of assembly, forms a complex composed of PxpA, PxpB and PxpC.

The catalysed reaction is 5-oxo-L-proline + ATP + 2 H2O = L-glutamate + ADP + phosphate + H(+). Its function is as follows. Catalyzes the cleavage of 5-oxoproline to form L-glutamate coupled to the hydrolysis of ATP to ADP and inorganic phosphate. The protein is 5-oxoprolinase subunit A of Geobacillus kaustophilus (strain HTA426).